The primary structure comprises 644 residues: Biosynthetic arginine decarboxylase (644 aa).

K113 is subject to N6-(pyridoxal phosphate)lysine. 293-303 (FDVGGGLGVDY) contributes to the substrate binding site.

It belongs to the Orn/Lys/Arg decarboxylase class-II family. SpeA subfamily. It depends on Mg(2+) as a cofactor. The cofactor is pyridoxal 5'-phosphate.

The catalysed reaction is L-arginine + H(+) = agmatine + CO2. Functionally, catalyzes the biosynthesis of agmatine from arginine. The sequence is that of Biosynthetic arginine decarboxylase from Pasteurella multocida (strain Pm70).